The following is a 197-amino-acid chain: GTP cyclohydrolase 1 (197 aa).

3 residues coordinate Zn(2+): Cys85, His88, and Cys156.

Belongs to the GTP cyclohydrolase I family. In terms of assembly, toroid-shaped homodecamer, composed of two pentamers of five dimers.

It carries out the reaction GTP + H2O = 7,8-dihydroneopterin 3'-triphosphate + formate + H(+). It participates in cofactor biosynthesis; 7,8-dihydroneopterin triphosphate biosynthesis; 7,8-dihydroneopterin triphosphate from GTP: step 1/1. This chain is GTP cyclohydrolase 1, found in Mesorhizobium japonicum (strain LMG 29417 / CECT 9101 / MAFF 303099) (Mesorhizobium loti (strain MAFF 303099)).